The chain runs to 376 residues: Methionine import ATP-binding protein MetN 2 (376 aa).

The ABC transporter domain maps to 34–273 (VRFINLGKTY…PQHDVSKTLL (240 aa)). 70–77 (GRSGAGKS) serves as a coordination point for ATP.

The protein belongs to the ABC transporter superfamily. Methionine importer (TC 3.A.1.24) family. The complex is composed of two ATP-binding proteins (MetN), two transmembrane proteins (MetI) and a solute-binding protein (MetQ).

It is found in the cell inner membrane. It carries out the reaction L-methionine(out) + ATP + H2O = L-methionine(in) + ADP + phosphate + H(+). The enzyme catalyses D-methionine(out) + ATP + H2O = D-methionine(in) + ADP + phosphate + H(+). Part of the ABC transporter complex MetNIQ involved in methionine import. Responsible for energy coupling to the transport system. This Pseudomonas savastanoi pv. phaseolicola (strain 1448A / Race 6) (Pseudomonas syringae pv. phaseolicola (strain 1448A / Race 6)) protein is Methionine import ATP-binding protein MetN 2.